A 405-amino-acid chain; its full sequence is S-adenosylmethionine synthase (405 aa).

G141–D146 contributes to the ATP binding site.

This sequence belongs to the AdoMet synthase 2 family. The cofactor is Mg(2+).

The catalysed reaction is L-methionine + ATP + H2O = S-adenosyl-L-methionine + phosphate + diphosphate. Its pathway is amino-acid biosynthesis; S-adenosyl-L-methionine biosynthesis; S-adenosyl-L-methionine from L-methionine: step 1/1. Catalyzes the formation of S-adenosylmethionine from methionine and ATP. The sequence is that of S-adenosylmethionine synthase from Methanococcus maripaludis (Methanococcus deltae).